Here is a 647-residue protein sequence, read N- to C-terminus: Exoribonuclease 2 (647 aa).

An RNB domain is found at 190–519 (REDLTSLPFV…NHRLLKAIIK (330 aa)). The 83-residue stretch at 564–646 (EQRFSAEVID…ETRSIVARPV (83 aa)) folds into the S1 motif domain.

It belongs to the RNR ribonuclease family. RNase II subfamily.

It is found in the cytoplasm. It carries out the reaction Exonucleolytic cleavage in the 3'- to 5'-direction to yield nucleoside 5'-phosphates.. Its function is as follows. Involved in mRNA degradation. Hydrolyzes single-stranded polyribonucleotides processively in the 3' to 5' direction. The chain is Exoribonuclease 2 from Erwinia tasmaniensis (strain DSM 17950 / CFBP 7177 / CIP 109463 / NCPPB 4357 / Et1/99).